A 510-amino-acid polypeptide reads, in one-letter code: Histidine ammonia-lyase (510 aa).

The segment at residues 144-146 is a cross-link (5-imidazolinone (Ala-Gly)); that stretch reads ASG. Serine 145 is modified (2,3-didehydroalanine (Ser)).

The protein belongs to the PAL/histidase family. Post-translationally, contains an active site 4-methylidene-imidazol-5-one (MIO), which is formed autocatalytically by cyclization and dehydration of residues Ala-Ser-Gly.

Its subcellular location is the cytoplasm. It catalyses the reaction L-histidine = trans-urocanate + NH4(+). It participates in amino-acid degradation; L-histidine degradation into L-glutamate; N-formimidoyl-L-glutamate from L-histidine: step 1/3. This chain is Histidine ammonia-lyase, found in Chromobacterium violaceum (strain ATCC 12472 / DSM 30191 / JCM 1249 / CCUG 213 / NBRC 12614 / NCIMB 9131 / NCTC 9757 / MK).